Reading from the N-terminus, the 340-residue chain is Phospho-N-acetylmuramoyl-pentapeptide-transferase (340 aa).

A run of 9 helical transmembrane segments spans residues 22–42, 69–89, 95–115, 129–149, 156–176, 186–206, 209–229, 235–257, and 316–336; these read VVVP…LLIP, TMGG…WSGW, AVAL…WLVI, LLLQ…QGIP, GIGT…VLVG, GMDG…GLLH, PELS…LVHN, LFMG…LLGD, and VVGS…AWWH.

Belongs to the glycosyltransferase 4 family. MraY subfamily. Mg(2+) serves as cofactor.

It localises to the cell inner membrane. It catalyses the reaction UDP-N-acetyl-alpha-D-muramoyl-L-alanyl-gamma-D-glutamyl-meso-2,6-diaminopimeloyl-D-alanyl-D-alanine + di-trans,octa-cis-undecaprenyl phosphate = di-trans,octa-cis-undecaprenyl diphospho-N-acetyl-alpha-D-muramoyl-L-alanyl-D-glutamyl-meso-2,6-diaminopimeloyl-D-alanyl-D-alanine + UMP. The protein operates within cell wall biogenesis; peptidoglycan biosynthesis. Catalyzes the initial step of the lipid cycle reactions in the biosynthesis of the cell wall peptidoglycan: transfers peptidoglycan precursor phospho-MurNAc-pentapeptide from UDP-MurNAc-pentapeptide onto the lipid carrier undecaprenyl phosphate, yielding undecaprenyl-pyrophosphoryl-MurNAc-pentapeptide, known as lipid I. The sequence is that of Phospho-N-acetylmuramoyl-pentapeptide-transferase from Synechococcus sp. (strain JA-2-3B'a(2-13)) (Cyanobacteria bacterium Yellowstone B-Prime).